Here is a 652-residue protein sequence, read N- to C-terminus: Phosphoglucomutase 1, chloroplastic (652 aa).

A chloroplast-targeting transit peptide spans 1-84; it reads MAFSAAASAS…LAARRTLRVR (84 aa). Alpha-D-glucose 1,6-bisphosphate-binding residues include Arg118 and Ser211. Residue Ser211 is the Phosphoserine intermediate of the active site. The Mg(2+) site is built by Ser211, Asp376, Asp378, and Asp380. Ser211 bears the Phosphoserine mark. Positions 380, 381, 443, 462, 464, and 475 each coordinate alpha-D-glucose 1,6-bisphosphate.

This sequence belongs to the phosphohexose mutase family. Requires Mg(2+) as cofactor.

The protein localises to the plastid. Its subcellular location is the chloroplast. The enzyme catalyses alpha-D-glucose 1-phosphate = alpha-D-glucose 6-phosphate. It carries out the reaction O-phospho-L-seryl-[protein] + alpha-D-glucose 1-phosphate = alpha-D-glucose 1,6-bisphosphate + L-seryl-[protein]. It catalyses the reaction alpha-D-glucose 1,6-bisphosphate + L-seryl-[protein] = O-phospho-L-seryl-[protein] + alpha-D-glucose 6-phosphate. With respect to regulation, inhibited by the Calvin cycle intermediates fructose-1,6-bisphosphate and ribulose-1,5-bisphosphate. Its function is as follows. Catalyzes the reversible isomerization of alpha-D-glucose 1-phosphate to alpha-D-glucose 6-phosphate. The mechanism proceeds via the intermediate compound alpha-D-glucose 1,6-bisphosphate. This enzyme participates in both the breakdown and synthesis of glucose. Required for sucrose production and accumulation necessary during plant development. Promotes gravitropic responses, negative in shoots but positive in roots, by facilitating starch granules (statoliths) formation. This Marchantia polymorpha (Common liverwort) protein is Phosphoglucomutase 1, chloroplastic.